We begin with the raw amino-acid sequence, 340 residues long: UDP-N-acetylglucosamine--N-acetylmuramyl-(pentapeptide) pyrophosphoryl-undecaprenol N-acetylglucosamine transferase (340 aa).

UDP-N-acetyl-alpha-D-glucosamine is bound by residues 15–17, Asn127, Ser184, Ile230, and Gln275; that span reads TGG.

The protein belongs to the glycosyltransferase 28 family. MurG subfamily.

Its subcellular location is the cell inner membrane. The enzyme catalyses di-trans,octa-cis-undecaprenyl diphospho-N-acetyl-alpha-D-muramoyl-L-alanyl-D-glutamyl-meso-2,6-diaminopimeloyl-D-alanyl-D-alanine + UDP-N-acetyl-alpha-D-glucosamine = di-trans,octa-cis-undecaprenyl diphospho-[N-acetyl-alpha-D-glucosaminyl-(1-&gt;4)]-N-acetyl-alpha-D-muramoyl-L-alanyl-D-glutamyl-meso-2,6-diaminopimeloyl-D-alanyl-D-alanine + UDP + H(+). It functions in the pathway cell wall biogenesis; peptidoglycan biosynthesis. Cell wall formation. Catalyzes the transfer of a GlcNAc subunit on undecaprenyl-pyrophosphoryl-MurNAc-pentapeptide (lipid intermediate I) to form undecaprenyl-pyrophosphoryl-MurNAc-(pentapeptide)GlcNAc (lipid intermediate II). This Vesicomyosocius okutanii subsp. Calyptogena okutanii (strain HA) protein is UDP-N-acetylglucosamine--N-acetylmuramyl-(pentapeptide) pyrophosphoryl-undecaprenol N-acetylglucosamine transferase.